The primary structure comprises 101 residues: NAD(P)H-quinone oxidoreductase subunit 4L, chloroplastic (101 aa).

The next 3 membrane-spanning stretches (helical) occupy residues 2 to 22 (MLEH…YGLI), 32 to 52 (MCLE…SGFF), and 61 to 81 (IFSV…LAIV).

Belongs to the complex I subunit 4L family. In terms of assembly, NDH is composed of at least 16 different subunits, 5 of which are encoded in the nucleus.

Its subcellular location is the plastid. The protein resides in the chloroplast thylakoid membrane. The catalysed reaction is a plastoquinone + NADH + (n+1) H(+)(in) = a plastoquinol + NAD(+) + n H(+)(out). It catalyses the reaction a plastoquinone + NADPH + (n+1) H(+)(in) = a plastoquinol + NADP(+) + n H(+)(out). Functionally, NDH shuttles electrons from NAD(P)H:plastoquinone, via FMN and iron-sulfur (Fe-S) centers, to quinones in the photosynthetic chain and possibly in a chloroplast respiratory chain. The immediate electron acceptor for the enzyme in this species is believed to be plastoquinone. Couples the redox reaction to proton translocation, and thus conserves the redox energy in a proton gradient. This Jasminum nudiflorum (Winter jasmine) protein is NAD(P)H-quinone oxidoreductase subunit 4L, chloroplastic.